A 177-amino-acid polypeptide reads, in one-letter code: Large ribosomal subunit protein uL6 (177 aa).

This sequence belongs to the universal ribosomal protein uL6 family. As to quaternary structure, part of the 50S ribosomal subunit.

Functionally, this protein binds to the 23S rRNA, and is important in its secondary structure. It is located near the subunit interface in the base of the L7/L12 stalk, and near the tRNA binding site of the peptidyltransferase center. The chain is Large ribosomal subunit protein uL6 from Pasteurella multocida (strain Pm70).